The chain runs to 342 residues: S-adenosylmethionine:tRNA ribosyltransferase-isomerase (342 aa).

The protein belongs to the QueA family. Monomer.

It is found in the cytoplasm. It carries out the reaction 7-aminomethyl-7-carbaguanosine(34) in tRNA + S-adenosyl-L-methionine = epoxyqueuosine(34) in tRNA + adenine + L-methionine + 2 H(+). Its pathway is tRNA modification; tRNA-queuosine biosynthesis. Transfers and isomerizes the ribose moiety from AdoMet to the 7-aminomethyl group of 7-deazaguanine (preQ1-tRNA) to give epoxyqueuosine (oQ-tRNA). The sequence is that of S-adenosylmethionine:tRNA ribosyltransferase-isomerase from Streptococcus pyogenes serotype M49 (strain NZ131).